A 37-amino-acid chain; its full sequence is Conotoxin Bt1.8 (37 aa).

Residues Pro-1 to Lys-20 constitute a propeptide that is removed on maturation. 2 disulfide bridges follow: Cys-22–Cys-28 and Cys-23–Cys-36. Cys-36 carries the cysteine amide modification.

The protein belongs to the conotoxin A superfamily. Expressed by the venom duct.

The protein resides in the secreted. Functionally, alpha-conotoxins bind to the nicotinic acetylcholine receptors (nAChR) and inhibit them. This toxin inhibits mammalian alpha-3-beta-2/CHRNA3-CHRNB2 nAChR (IC(50)=9.4 nM (rat), IC(50)=8.8 nM (human)), as well as the subunit chimera alpha-6/alpha-3-beta-2-beta-3 nAChR (CHRNA6/CHRNA3-CHRNB2-CHRNB3)(IC(50)=2.1 nM (rat), IC(50)=1.7 nM (human)). Binds to rat alpha-6/alpha-3-beta-2-beta-3 more rapidly than to alpha-3-beta-2, and dissociates more rapidly from alpha-3-beta-2 than from alpha-6/alpha-3-beta-2-beta-3. This Conus betulinus (Beech cone) protein is Conotoxin Bt1.8.